We begin with the raw amino-acid sequence, 91 residues long: Large ribosomal subunit protein bL31B (91 aa).

The protein belongs to the bacterial ribosomal protein bL31 family. Type B subfamily. In terms of assembly, part of the 50S ribosomal subunit.

The protein is Large ribosomal subunit protein bL31B of Mycolicibacterium vanbaalenii (strain DSM 7251 / JCM 13017 / BCRC 16820 / KCTC 9966 / NRRL B-24157 / PYR-1) (Mycobacterium vanbaalenii).